Reading from the N-terminus, the 299-residue chain is tRNA dimethylallyltransferase (299 aa).

11 to 18 lines the ATP pocket; sequence GPTAVGKT. Substrate is bound at residue 13 to 18; the sequence is TAVGKT. An interaction with substrate tRNA region spans residues 36–39; that stretch reads DSQQ.

Belongs to the IPP transferase family. Monomer. It depends on Mg(2+) as a cofactor.

The enzyme catalyses adenosine(37) in tRNA + dimethylallyl diphosphate = N(6)-dimethylallyladenosine(37) in tRNA + diphosphate. Functionally, catalyzes the transfer of a dimethylallyl group onto the adenine at position 37 in tRNAs that read codons beginning with uridine, leading to the formation of N6-(dimethylallyl)adenosine (i(6)A). This chain is tRNA dimethylallyltransferase, found in Streptococcus pyogenes serotype M12 (strain MGAS2096).